The following is an 81-amino-acid chain: MKTLLLTTVVVTIVCLDLEYTLKCNKLVPLFYKTCPAGKNLCYKMFMVATPKVPVKRGCIDVCPKSSLLVKYVCCNTDRCN.

The N-terminal stretch at 1–21 is a signal peptide; sequence MKTLLLTTVVVTIVCLDLEYT. 4 disulfide bridges follow: C24–C42, C35–C59, C63–C74, and C75–C80.

The protein belongs to the three-finger toxin family. Short-chain subfamily. Type IA cytotoxin sub-subfamily. As to quaternary structure, monomer in solution; Homodimer and oligomer in the presence of negatively charged lipids forming a pore with a size ranging between 20 and 30 Angstroms. Expressed by the venom gland.

The protein localises to the secreted. It is found in the target cell membrane. Its function is as follows. Shows cytolytic activity on many different cells by forming pore in lipid membranes. In vivo, increases heart rate or kills the animal by cardiac arrest. In addition, it binds to heparin with high affinity, interacts with Kv channel-interacting protein 1 (KCNIP1) in a calcium-independent manner, and binds to integrin alpha-V/beta-3 (ITGAV/ITGB3) with moderate affinity. The protein is Cytotoxin of Naja sputatrix (Malayan spitting cobra).